Here is a 499-residue protein sequence, read N- to C-terminus: Phenylalanine--tRNA ligase alpha subunit (499 aa).

L-phenylalanine is bound by residues T342, 381–383 (QID), and F422. E424 contacts Mg(2+). Residue F447 participates in L-phenylalanine binding.

This sequence belongs to the class-II aminoacyl-tRNA synthetase family. Phe-tRNA synthetase alpha subunit type 2 subfamily. Tetramer of two alpha and two beta subunits. Mg(2+) serves as cofactor.

It localises to the cytoplasm. The enzyme catalyses tRNA(Phe) + L-phenylalanine + ATP = L-phenylalanyl-tRNA(Phe) + AMP + diphosphate + H(+). In Pyrococcus horikoshii (strain ATCC 700860 / DSM 12428 / JCM 9974 / NBRC 100139 / OT-3), this protein is Phenylalanine--tRNA ligase alpha subunit.